We begin with the raw amino-acid sequence, 918 residues long: Signal transduction histidine-protein kinase BarA (918 aa).

At methionine 1–arginine 9 the chain is on the cytoplasmic side. A helical membrane pass occupies residues methionine 10 to valine 31. Residues histidine 32–glutamate 176 are Periplasmic-facing. A helical transmembrane segment spans residues isoleucine 177–tryptophan 196. Residues arginine 197–glycine 918 lie on the Cytoplasmic side of the membrane. The HAMP domain maps to arginine 200–glutamate 252. A Histidine kinase domain is found at asparagine 299–leucine 520. The residue at position 302 (histidine 302) is a Phosphohistidine; by autocatalysis. Positions threonine 669 to lysine 785 constitute a Response regulatory domain. Position 718 is a 4-aspartylphosphate (aspartate 718). Residues lysine 822 to glycine 918 enclose the HPt domain. Histidine 861 is modified (phosphohistidine).

Activation requires a sequential transfer of a phosphate group from a His in the primary transmitter domain, to an Asp in the receiver domain and to a His in the secondary transmitter domain.

The protein resides in the cell inner membrane. The catalysed reaction is ATP + protein L-histidine = ADP + protein N-phospho-L-histidine.. Member of the two-component regulatory system UvrY/BarA involved in the regulation of carbon metabolism via the CsrA/CsrB regulatory system. Phosphorylates UvrY, probably via a four-step phosphorelay. The protein is Signal transduction histidine-protein kinase BarA (barA) of Escherichia coli O157:H7.